The primary structure comprises 774 residues: MTGTTPLPSSSLSVEQVNRIASNQEQNPFDILGPHPYEHEGQAGWVIRAYLPEAQEAAVICPALRREFAMHPVHHPHFFETWVPEETLEIYQLRITEGERERIIYDPYAFRSPLLTDYDIHLFAEGNHHRIYEKLGAHPCELENVAGVNFAVWAPSARNVSILGDFNSWDGRKHQMARRSNGIWELFIPELTVGAAYKYEIKNYDGHIYEKSDPYGFQQEVRPKTASIVADLDRYTWGDADWLERRRHQEPLRQPISVYEVHLGSWMHASSDAIATDAQGKPLPPVPVADLKPGARFLTYRELADRLIPYVLDLGYSHIELLPIAEHPFDGSWGYQVTGYYAATSRYGSPEDFMYFVDRCHQNGIGVILDWVPGHFPKDGHGLAFFDGTHLYEHADSRQGEHREWGTLVFNYGRHEVRNFLAANALFWFDKYHIDGIRVDAVASMLYLDYNRKEGEWIPNEYGGRENIEAADFLRQVNHLIFSYFPGALSIAEESTSWPMVSWPTYVGGLGFNLKWNMGWMHDMLDYFSMDPWFRQFHQNNVTFSIWYAFSENFMLALSHDEVVHGKSNLIGKMPGDEWQKFANLRCLLGYMFTHPGKKTLFMGMEFGQWAEWNVWGDLEWHLLQYEPHQGLKQFVKDLNHLYRNAPALYSEDCNQAGFEWIDCSDNRHSIVSFIRRAHESDRFLVVVCNFTPQPHAHYRIGVPVAGFYREIFNSDARSYGGSNMGNLGGKWTDEWSCHNRPYSLDLCLPPLTTLVLELASGPESLSEAANSPL.

Residue Asp-440 is the Nucleophile of the active site. Glu-493 acts as the Proton donor in catalysis.

The protein belongs to the glycosyl hydrolase 13 family. GlgB subfamily. As to quaternary structure, monomer.

The catalysed reaction is Transfers a segment of a (1-&gt;4)-alpha-D-glucan chain to a primary hydroxy group in a similar glucan chain.. Its pathway is glycan biosynthesis; glycogen biosynthesis. Catalyzes the formation of the alpha-1,6-glucosidic linkages in glycogen by scission of a 1,4-alpha-linked oligosaccharide from growing alpha-1,4-glucan chains and the subsequent attachment of the oligosaccharide to the alpha-1,6 position. The protein is 1,4-alpha-glucan branching enzyme GlgB (glgB) of Synechococcus elongatus (strain ATCC 33912 / PCC 7942 / FACHB-805) (Anacystis nidulans R2).